Here is a 362-residue protein sequence, read N- to C-terminus: Serine/threonine-protein kinase ZRK4 (362 aa).

Residues 1-23 are disordered; it reads MNDQKMSCWRKKSKKKNSEANQR. The Protein kinase domain occupies 35 to 362; sequence LEDLIELCNG…KELKRIERWT (328 aa). Residues 41-49 and Lys-89 each bind ATP; that span reads LCNGKSNPI. Asp-185 acts as the Proton acceptor in catalysis.

The protein belongs to the protein kinase superfamily. Ser/Thr protein kinase family. ZRK subfamily.

The enzyme catalyses L-seryl-[protein] + ATP = O-phospho-L-seryl-[protein] + ADP + H(+). The catalysed reaction is L-threonyl-[protein] + ATP = O-phospho-L-threonyl-[protein] + ADP + H(+). This is Serine/threonine-protein kinase ZRK4 from Arabidopsis thaliana (Mouse-ear cress).